A 240-amino-acid polypeptide reads, in one-letter code: Cysteine-rich venom protein triflin (240 aa).

A signal peptide spans M1 to G19. The SCP domain maps to D39 to Y166. 8 disulfide bridges follow: C75–C153, C92–C167, C148–C164, C186–C193, C189–C198, C202–C235, C211–C229, and C220–C233. The ShKT domain maps to C202 to C235.

The protein belongs to the CRISP family. Forms a stable, non-covalent complex with SSP-2. Expressed by the venom gland.

The protein resides in the secreted. Blocks contraction of smooth muscle elicited by high potassium-induced depolarization. May target voltage-gated calcium channels (Cav) on smooth muscle. This chain is Cysteine-rich venom protein triflin, found in Protobothrops flavoviridis (Habu).